An 804-amino-acid chain; its full sequence is uncharacterized protein (804 aa).

This is an uncharacterized protein from Methanothermobacter marburgensis (strain ATCC BAA-927 / DSM 2133 / JCM 14651 / NBRC 100331 / OCM 82 / Marburg) (Methanobacterium thermoautotrophicum).